A 193-amino-acid polypeptide reads, in one-letter code: Ribosomal RNA small subunit methyltransferase G (193 aa).

Residues Gly-64, Leu-69, 113-114, and Arg-126 contribute to the S-adenosyl-L-methionine site; that span reads IE.

The protein belongs to the methyltransferase superfamily. RNA methyltransferase RsmG family.

Its subcellular location is the cytoplasm. The catalysed reaction is guanosine(527) in 16S rRNA + S-adenosyl-L-methionine = N(7)-methylguanosine(527) in 16S rRNA + S-adenosyl-L-homocysteine. Functionally, specifically methylates the N7 position of guanine in position 527 of 16S rRNA. The chain is Ribosomal RNA small subunit methyltransferase G from Rickettsia massiliae (strain Mtu5).